Reading from the N-terminus, the 470-residue chain is 3-isopropylmalate dehydratase large subunit (470 aa).

[4Fe-4S] cluster is bound by residues C349, C409, and C412.

This sequence belongs to the aconitase/IPM isomerase family. LeuC type 1 subfamily. As to quaternary structure, heterodimer of LeuC and LeuD. [4Fe-4S] cluster serves as cofactor.

The catalysed reaction is (2R,3S)-3-isopropylmalate = (2S)-2-isopropylmalate. It participates in amino-acid biosynthesis; L-leucine biosynthesis; L-leucine from 3-methyl-2-oxobutanoate: step 2/4. In terms of biological role, catalyzes the isomerization between 2-isopropylmalate and 3-isopropylmalate, via the formation of 2-isopropylmaleate. This is 3-isopropylmalate dehydratase large subunit from Methylobacterium radiotolerans (strain ATCC 27329 / DSM 1819 / JCM 2831 / NBRC 15690 / NCIMB 10815 / 0-1).